A 444-amino-acid chain; its full sequence is Methylenetetrahydrofolate--tRNA-(uracil-5-)-methyltransferase TrmFO (444 aa).

Residue 11 to 16 coordinates FAD; that stretch reads GGGLAG.

This sequence belongs to the MnmG family. TrmFO subfamily. FAD serves as cofactor.

The protein localises to the cytoplasm. It catalyses the reaction uridine(54) in tRNA + (6R)-5,10-methylene-5,6,7,8-tetrahydrofolate + NADH + H(+) = 5-methyluridine(54) in tRNA + (6S)-5,6,7,8-tetrahydrofolate + NAD(+). It carries out the reaction uridine(54) in tRNA + (6R)-5,10-methylene-5,6,7,8-tetrahydrofolate + NADPH + H(+) = 5-methyluridine(54) in tRNA + (6S)-5,6,7,8-tetrahydrofolate + NADP(+). In terms of biological role, catalyzes the folate-dependent formation of 5-methyl-uridine at position 54 (M-5-U54) in all tRNAs. This Desulfotalea psychrophila (strain LSv54 / DSM 12343) protein is Methylenetetrahydrofolate--tRNA-(uracil-5-)-methyltransferase TrmFO.